The primary structure comprises 56 residues: Large ribosomal subunit protein bL33 (56 aa).

This sequence belongs to the bacterial ribosomal protein bL33 family.

This Actinobacillus succinogenes (strain ATCC 55618 / DSM 22257 / CCUG 43843 / 130Z) protein is Large ribosomal subunit protein bL33.